We begin with the raw amino-acid sequence, 109 residues long: Guanylate cyclase activator 2B (109 aa).

The signal sequence occupies residues 1-23 (MKVLALPVAVAAMLLVLAQNTQS). Positions 24–94 (VYIQYEGFQV…NIFRALRSIS (71 aa)) are excised as a propeptide. Cystine bridges form between cysteine 65–cysteine 78, cysteine 98–cysteine 106, and cysteine 101–cysteine 109.

It belongs to the guanylin family. As to expression, small and large intestine and atria and ventricles of heart. Both uroguanylin and prouroguanylin are found in plasma.

The protein resides in the secreted. Functionally, endogenous activator of intestinal guanylate cyclase. It stimulates this enzyme through the same receptor binding region as the heat-stable enterotoxins. May be a potent physiological regulator of intestinal fluid and electrolyte transport. May be an autocrine/paracrine regulator of intestinal salt and water transport. The protein is Guanylate cyclase activator 2B (GUCA2B) of Didelphis virginiana (North American opossum).